Here is a 401-residue protein sequence, read N- to C-terminus: Protein zntC (401 aa).

A run of 3 helical transmembrane segments spans residues 33–53, 61–81, and 114–134; these read GGLI…PWFL, LVSV…GAGF, and ITIV…SGGL. Positions 141–247 are disordered; sequence NHMDLSQHNH…SHKDEKDSEK (107 aa). Over residues 167–184 the composition is skewed to acidic residues; the sequence is GDDDDDDVNEDQEEDSTK. A compositionally biased stretch (low complexity) spans 200–209; the sequence is HNSSNSSSNG. Positions 212-225 are enriched in basic residues; that stretch reads HGLKKKKKSKKEHG. Residues 226–247 show a composition bias toward basic and acidic residues; that stretch reads HGHNHDHSSNGHSHKDEKDSEK. A run of 5 helical transmembrane segments spans residues 256-276, 285-305, 316-336, 351-371, and 381-401; these read AWVF…GLGS, GLLI…GIAI, CIAL…GMAI, GIIL…ELLP, and KLKL…ALWV.

Belongs to the ZIP transporter (TC 2.A.5) family.

Its subcellular location is the membrane. In terms of biological role, may transport divalent cations. May participate, with dstA, in the regulation of the differentiation of stalk cells during development. The sequence is that of Protein zntC (zntC) from Dictyostelium discoideum (Social amoeba).